Here is a 585-residue protein sequence, read N- to C-terminus: L-gulonolactone oxidase 3 (585 aa).

Positions 1 to 24 (MRYSHTLQQFSILSFFVTIWTVQS) are cleaved as a signal peptide. The region spanning 51-233 (KTCHAANVTY…SKVKLSIEKA (183 aa)) is the FAD-binding PCMH-type domain.

It belongs to the oxygen-dependent FAD-linked oxidoreductase family. FAD is required as a cofactor.

It is found in the vacuole. It carries out the reaction L-gulono-1,4-lactone + O2 = L-ascorbate + H2O2 + H(+). Its pathway is cofactor biosynthesis; L-ascorbate biosynthesis. Functionally, catalyzes the oxidation of L-gulono-1,4-lactone to ascorbic acid. L-gulono-1,4-lactone is oxidized to hydrogen peroxide and L-xylo-hexulonolactone which spontaneously isomerizes to L-ascorbate. This Arabidopsis thaliana (Mouse-ear cress) protein is L-gulonolactone oxidase 3.